The following is a 121-amino-acid chain: Small ribosomal subunit protein uS13 (121 aa).

A disordered region spans residues 97–121 (VRGQRTRTNARTRRGARKTVAGKKK). The span at 100–121 (QRTRTNARTRRGARKTVAGKKK) shows a compositional bias: basic residues.

It belongs to the universal ribosomal protein uS13 family. In terms of assembly, part of the 30S ribosomal subunit. Forms a loose heterodimer with protein S19. Forms two bridges to the 50S subunit in the 70S ribosome.

Its function is as follows. Located at the top of the head of the 30S subunit, it contacts several helices of the 16S rRNA. In the 70S ribosome it contacts the 23S rRNA (bridge B1a) and protein L5 of the 50S subunit (bridge B1b), connecting the 2 subunits; these bridges are implicated in subunit movement. Contacts the tRNAs in the A and P-sites. In Synechococcus sp. (strain CC9605), this protein is Small ribosomal subunit protein uS13.